We begin with the raw amino-acid sequence, 381 residues long: N-acetyldiaminopimelate deacetylase (381 aa).

The active site involves aspartate 73. Catalysis depends on glutamate 132, which acts as the Proton acceptor.

Belongs to the peptidase M20A family. N-acetyldiaminopimelate deacetylase subfamily.

It carries out the reaction N-acetyl-(2S,6S)-2,6-diaminopimelate + H2O = (2S,6S)-2,6-diaminopimelate + acetate. The protein operates within amino-acid biosynthesis; L-lysine biosynthesis via DAP pathway; LL-2,6-diaminopimelate from (S)-tetrahydrodipicolinate (acetylase route): step 3/3. In terms of biological role, catalyzes the conversion of N-acetyl-diaminopimelate to diaminopimelate and acetate. In Limosilactobacillus reuteri (strain DSM 20016) (Lactobacillus reuteri), this protein is N-acetyldiaminopimelate deacetylase.